A 201-amino-acid chain; its full sequence is Recombination protein RecR (201 aa).

Residues 57 to 74 (CSICGNITATDTDPCVIC) form a C4-type zinc finger. The region spanning 82-178 (STVFVVENSR…AVTRLAHGLA (97 aa)) is the Toprim domain.

Belongs to the RecR family.

In terms of biological role, may play a role in DNA repair. It seems to be involved in an RecBC-independent recombinational process of DNA repair. It may act with RecF and RecO. This is Recombination protein RecR from Leuconostoc mesenteroides subsp. mesenteroides (strain ATCC 8293 / DSM 20343 / BCRC 11652 / CCM 1803 / JCM 6124 / NCDO 523 / NBRC 100496 / NCIMB 8023 / NCTC 12954 / NRRL B-1118 / 37Y).